We begin with the raw amino-acid sequence, 1174 residues long: Male determiner protein Mdmd(II) (1174 aa).

Residues 1-15 (MNATDAESRKPENKP) show a composition bias toward basic and acidic residues. Disordered regions lie at residues 1 to 51 (MNAT…SGQR), 80 to 109 (KDGS…HPVE), and 136 to 259 (KQLS…LRRS). A compositionally biased stretch (low complexity) spans 16–35 (SSESSSSGSTSGSSDGEVSS). The segment covering 36 to 47 (KTYFKNNKSKVL) has biased composition (polar residues). A compositionally biased stretch (basic and acidic residues) spans 80–92 (KDGSNEMLPKEDS). A compositionally biased stretch (polar residues) spans 93–102 (INTNHNYTTD). Residues 138–153 (LSAYRSRSRSTRLSYS) show a composition bias toward low complexity. Residues 183–200 (HGRDSSTTKRSVSRDKDN) show a composition bias toward basic and acidic residues. The span at 201–223 (RLRRRIGSSRSHTRSHSRFRRSE) shows a compositional bias: basic residues. Over residues 235–259 (RSQERRHERRRSMSSDYERIALRRS) the composition is skewed to basic and acidic residues. Residues 348–531 (KKYIHGYINK…KVLFQVRRDG (184 aa)) enclose the MIF4G domain. The segment covering 597-608 (DSDGSFGSGSNS) has biased composition (low complexity). Positions 597–616 (DSDGSFGSGSNSETALSDCD) are disordered. The 117-residue stretch at 641-757 (ALRRTIYLTL…SWDVLDCIKL (117 aa)) folds into the MI domain. Over residues 840 to 857 (SAPSSSSSSSLSSELSAP) the composition is skewed to low complexity. Disordered stretches follow at residues 840–1045 (SAPS…SRTK) and 1095–1133 (RKDN…NHSR). Residues 869–909 (KKKHKGKNKKMTKKKNPSKKKEKTKKIVGKNKIAAKNKTIK) are compositionally biased toward basic residues. Basic and acidic residues predominate over residues 910–924 (RRTDKDNSSSKDNFL). Low complexity predominate over residues 926-957 (SESSSNESISLDSLSSELFAPSSYSSSESSND). A compositionally biased stretch (basic residues) spans 963–1001 (KHKGKNKKMTKKKNPSNKREKTKKKLSKNKKAPNKNTKK). Positions 1010–1020 (SSESSISESKS) are enriched in low complexity. Residues 1034–1045 (RKKRVTSKSRTK) are compositionally biased toward basic residues. Basic and acidic residues predominate over residues 1095–1118 (RKDNYGNRQNHEISQRHDSEIKRR). The segment covering 1119-1130 (REERKKRHHEKN) has biased composition (basic residues).

The protein belongs to the CWC22 family. Component of the spliceosome C complex.

The protein localises to the nucleus speckle. Male determiner protein (M-factor) that controls male somatic sexual differentiation. Acts as a dominant factor that regulates the mRNA splicing of transformer (tra) and doublesex (dsx) transcripts and promotes expression of male splice forms of tra and dsx. Probably acts as a component of the spliceosome C complex required for mRNA splicing factor and exon-junction complex (EJC) assembly. Hinders eIF4AIII from non-specifically binding RNA and escorts it to the splicing machinery to promote EJC assembly on mature mRNAs. This is Male determiner protein Mdmd(II) from Musca domestica (House fly).